Consider the following 139-residue polypeptide: Plasmid stability protein StbB (139 aa).

The region spanning isoleucine 2 to proline 136 is the PINc domain. Mg(2+)-binding residues include aspartate 5 and aspartate 104.

It belongs to the PINc/VapC protein family. Mg(2+) serves as cofactor.

Functionally, toxic component of a type II toxin-antitoxin (TA) system. An RNase. Involved in plasmid stability. In Pseudomonas syringae pv. tomato (strain ATCC BAA-871 / DC3000), this protein is Plasmid stability protein StbB (stbB).